A 296-amino-acid chain; its full sequence is uncharacterized protein (296 aa).

In terms of domain architecture, FAD-binding FR-type spans 1–95; that stretch reads MYKIVSKKEL…VGPLGVPSEF (95 aa).

This is an uncharacterized protein from Clostridium beijerinckii (Clostridium MP).